The sequence spans 410 residues: Cysteine desulfurase IscS (410 aa).

Pyridoxal 5'-phosphate-binding positions include 80–81 (AT), N160, Q188, and 208–210 (SGH). K211 is modified (N6-(pyridoxal phosphate)lysine). Residue T248 coordinates pyridoxal 5'-phosphate. Catalysis depends on C334, which acts as the Cysteine persulfide intermediate. [2Fe-2S] cluster is bound at residue C334.

Belongs to the class-V pyridoxal-phosphate-dependent aminotransferase family. NifS/IscS subfamily. Homodimer. Forms a heterotetramer with IscU, interacts with other sulfur acceptors. Pyridoxal 5'-phosphate is required as a cofactor.

The protein resides in the cytoplasm. It catalyses the reaction (sulfur carrier)-H + L-cysteine = (sulfur carrier)-SH + L-alanine. Its pathway is cofactor biosynthesis; iron-sulfur cluster biosynthesis. Functionally, master enzyme that delivers sulfur to a number of partners involved in Fe-S cluster assembly, tRNA modification or cofactor biosynthesis. Catalyzes the removal of elemental sulfur atoms from cysteine to produce alanine. Functions as a sulfur delivery protein for Fe-S cluster synthesis onto IscU, an Fe-S scaffold assembly protein, as well as other S acceptor proteins. The polypeptide is Cysteine desulfurase IscS (Rickettsia akari (strain Hartford)).